A 221-amino-acid chain; its full sequence is 7-cyano-7-deazaguanine synthase (221 aa).

8 to 18 contributes to the ATP binding site; sequence MSGGMDSTLCA. Zn(2+) contacts are provided by Cys-187, Cys-195, Cys-198, and Cys-201.

Belongs to the QueC family. Zn(2+) is required as a cofactor.

It carries out the reaction 7-carboxy-7-deazaguanine + NH4(+) + ATP = 7-cyano-7-deazaguanine + ADP + phosphate + H2O + H(+). It functions in the pathway purine metabolism; 7-cyano-7-deazaguanine biosynthesis. Its function is as follows. Catalyzes the ATP-dependent conversion of 7-carboxy-7-deazaguanine (CDG) to 7-cyano-7-deazaguanine (preQ(0)). The sequence is that of 7-cyano-7-deazaguanine synthase from Campylobacter concisus (strain 13826).